A 139-amino-acid polypeptide reads, in one-letter code: Probable disulfide formation protein C (139 aa).

The helical transmembrane segment at 8–27 threads the bilayer; that stretch reads EYALLTAWGASFIATLGSLY. The cysteines at positions 37 and 40 are disulfide-linked. 2 helical membrane passes run 42 to 61 and 68 to 85; these read YQRI…VAKK and YSLP…YHYA. Cysteines 99 and 104 form a disulfide. A helical membrane pass occupies residues 113–135; sequence GFVTIPFLALIGFITIAVCSFIV.

The protein belongs to the DsbB family. BdbC subfamily.

The protein localises to the cell membrane. In terms of biological role, required for disulfide bond formation in some proteins. This is Probable disulfide formation protein C from Bacillus cereus (strain ATCC 14579 / DSM 31 / CCUG 7414 / JCM 2152 / NBRC 15305 / NCIMB 9373 / NCTC 2599 / NRRL B-3711).